A 148-amino-acid chain; its full sequence is Large ribosomal subunit protein uL15 (148 aa).

The interval 1–61 is disordered; sequence MKINDLKPAP…GGQMPLQRRV (61 aa).

The protein belongs to the universal ribosomal protein uL15 family. Part of the 50S ribosomal subunit.

Binds to the 23S rRNA. This Thermodesulfovibrio yellowstonii (strain ATCC 51303 / DSM 11347 / YP87) protein is Large ribosomal subunit protein uL15.